We begin with the raw amino-acid sequence, 1463 residues long: Collagen alpha-1(I) chain (1463 aa).

The signal sequence occupies residues 1–22 (MFSFVDLRLLLLLAATALLTHG). A propeptide spans 23 to 161 (QEEGQEEGQE…PPGLGGNFAP (139 aa)) (N-terminal propeptide). A VWFC domain is found at 38–96 (VTCVQNGLRYHDRDVWKPVPCQICVCDNGNVLCDDVICDELKDCPNAKVPTDECCPVCP). The interval 98–1217 (GQESPTDQET…AHDGGRYYRA (1120 aa)) is disordered. Over residues 138 to 153 (PGLPGPPGPPGPPGPP) the composition is skewed to pro residues. Residue Gln162 is modified to Pyrrolidone carboxylic acid. Residues 162 to 177 (QLSYGYDEKSTGISVP) form a nonhelical region (N-terminal) region. Residue Lys170 is modified to Allysine. Position 171 is a phosphoserine (Ser171). The triple-helical region stretch occupies residues 178–1191 (GPMGPSGPRG…PGPPGPPGPP (1014 aa)). 11 positions are modified to 4-hydroxyproline: Pro189, Pro192, Pro195, Pro204, Pro207, Pro210, Pro225, Pro240, Pro246, Pro255, and Pro261. The segment covering 197-216 (PQGFQGPPGEPGEPGASGPM) has biased composition (low complexity). Over residues 228–242 (NGDDGEAGKPGRPGE) the composition is skewed to basic and acidic residues. Lys264 bears the 5-hydroxylysine; alternate mark. O-linked (Gal...) hydroxylysine; alternate glycosylation occurs at Lys264. Ser270 is modified (phosphoserine). 5-hydroxylysine is present on residues Lys276 and Lys285. Residues 278–294 (DAGPAGPKGEPGSPGEN) show a composition bias toward low complexity. A 4-hydroxyproline mark is found at Pro288, Pro291, Pro297, Pro306, and Pro312. Residues 317 to 330 (PAGARGNDGATGAA) show a composition bias toward low complexity. Residues 332 to 344 (PPGPTGPAGPPGF) show a composition bias toward pro residues. A 4-hydroxyproline mark is found at Pro333, Pro342, and Pro345. Gly residues predominate over residues 349-358 (GAKGEGGPQG). Residues Pro372, Pro375, Pro387, Pro393, Pro402, Pro408, Pro411, and Pro426 each carry the 4-hydroxyproline modification. Over residues 378-417 (AGAAGPAGNPGADGQPGAKGANGAPGIAGAPGFPGARGPS) the composition is skewed to low complexity. The residue at position 429 (Lys429) is a 5-hydroxylysine. 4-hydroxyproline occurs at positions 435, 438, 450, 459, 474, 480, 489, and 495. The span at 484 to 493 (GERGGPGSRG) shows a compositional bias: gly residues. Positions 494 to 525 (FPGADGVAGPKGPAGERGAPGPAGPKGSPGEA) are enriched in low complexity. Lys504 is modified (5-hydroxylysine). A 4-hydroxyproline mark is found at Pro513, Pro522, Pro528, Pro534, Pro543, Pro546, Pro555, Pro564, Pro570, Pro582, Pro591, Pro600, Pro603, Pro621, Pro639, Pro645, Pro651, Pro657, Pro663, Pro669, Pro681, Pro690, Pro702, Pro714, Pro717, Pro723, Pro729, and Pro738. A compositionally biased stretch (low complexity) spans 537-563 (KGLTGSPGSPGPDGKTGPPGPAGQDGR). Positions 572 to 591 (ARGQAGVMGFPGPKGAAGEP) are enriched in low complexity. A compositionally biased stretch (low complexity) spans 633-660 (QGPAGSPGFQGLPGPAGPPGEAGKPGEQ). Residues 695-723 (PRGANGAPGNDGAKGDAGAPGAPGSQGAP) show a composition bias toward low complexity. The Cell attachment site motif lies at 744–746 (RGD). A 5-hydroxylysine modification is found at Lys750. 3 positions are modified to 4-hydroxyproline: Pro756, Pro771, and Pro777. Residues 783–797 (AGPSGPAGPTGARGA) are compositionally biased toward low complexity. Phosphoserine is present on Ser786. Residues Pro798, Pro804, Pro807, Pro816, Pro822, Pro840, Pro849, and Pro858 each carry the 4-hydroxyproline modification. The span at 810–837 (AGFAGPPGADGQPGAKGEPGDAGAKGDA) shows a compositional bias: low complexity. Over residues 839-851 (PPGPAGPAGPPGP) the composition is skewed to pro residues. Residues 852-882 (IGNVGAPGPKGARGSAGPPGATGFPGAAGRV) show a composition bias toward low complexity. Lys861 is modified (5-hydroxylysine). A 4-hydroxyproline mark is found at Pro870 and Pro876. Residue Pro884 is modified to 3-hydroxyproline. Pro885, Pro894, Pro897, Pro918, Pro927, Pro936, Pro945, Pro963, Pro972, Pro975, Pro981, Pro996, Pro1002, Pro1008, Pro1017, and Pro1023 each carry 4-hydroxyproline. A compositionally biased stretch (low complexity) spans 930–954 (AGEKGAPGADGPAGAPGTPGPQGIA). Pro residues predominate over residues 995–1005 (PPGPMGPPGLA). A 5-hydroxylysine modification is found at Lys1032. The segment covering 1041–1056 (AGPPGAPGAPGAPGPV) has biased composition (pro residues). 4-hydroxyproline is present on residues Pro1044, Pro1047, and Pro1050. Low complexity predominate over residues 1077–1091 (IGPVGARGPAGPQGP). Residues 1092–1094 (RGD) carry the Cell attachment site motif. The segment covering 1092-1106 (RGDKGETGEQGDRGI) has biased composition (basic and acidic residues). A 5-hydroxylysine modification is found at Lys1095. Lys1107 is subject to 5-hydroxylysine; alternate. O-linked (Gal...) hydroxylysine; alternate glycosylation occurs at Lys1107. 4-hydroxyproline occurs at positions 1119, 1122, 1125, 1143, and 1158. The segment covering 1125–1149 (PGEQGPSGASGPAGPRGPPGSAGSP) has biased composition (low complexity). Pro1163 is modified (3-hydroxyproline). 4-hydroxyproline is present on Pro1164. The span at 1176 to 1191 (AGPPGPPGPPGPPGPP) shows a compositional bias: pro residues. Position 1178 is a 3-hydroxyproline (Pro1178). The residue at position 1179 (Pro1179) is a 4-hydroxyproline. A 3-hydroxyproline modification is found at Pro1181. A 4-hydroxyproline modification is found at Pro1182. Position 1184 is a 3-hydroxyproline (Pro1184). 4-hydroxyproline occurs at positions 1185, 1188, and 1191. Positions 1192 to 1215 (SGGYDLSFLPQPPQEKAHDGGRYY) are nonhelical region (C-terminal). Basic and acidic residues predominate over residues 1206-1217 (EKAHDGGRYYRA). Residue Lys1207 is modified to Allysine. Residues 1218 to 1463 (DDANVVRDRD…GFDVGPACFL (246 aa)) constitute a propeptide, C-terminal propeptide. The Fibrillar collagen NC1 domain occupies 1228-1463 (LEVDTTLKSL…GFDVGPACFL (236 aa)). Cystine bridges form between Cys1258–Cys1290, Cys1298–Cys1461, and Cys1369–Cys1414. Positions 1276, 1278, 1279, 1281, and 1284 each coordinate Ca(2+).

It belongs to the fibrillar collagen family. As to quaternary structure, trimers of one alpha 2(I) and two alpha 1(I) chains. Interacts with MRC2. Interacts with TRAM2. Interacts with MFAP4 in a Ca (2+)-dependent manner. In terms of processing, contains mostly 4-hydroxyproline. Proline residues at the third position of the tripeptide repeating unit (G-X-Y) are hydroxylated in some or all of the chains. Post-translationally, contains 3-hydroxyproline at a few sites. This modification occurs on the first proline residue in the sequence motif Gly-Pro-Hyp, where Hyp is 4-hydroxyproline. Lysine residues at the third position of the tripeptide repeating unit (G-X-Y) are 5-hydroxylated in some or all of the chains. In terms of processing, O-glycosylated on hydroxylated lysine residues. The O-linked glycan consists of a Glc-Gal disaccharide. In terms of tissue distribution, forms the fibrils of tendon, ligaments and bones. In bones the fibrils are mineralized with calcium hydroxyapatite.

The protein localises to the secreted. Its subcellular location is the extracellular space. The protein resides in the extracellular matrix. Functionally, type I collagen is a member of group I collagen (fibrillar forming collagen). The sequence is that of Collagen alpha-1(I) chain (COL1A1) from Bos taurus (Bovine).